Reading from the N-terminus, the 155-residue chain is Small ribosomal subunit protein uS7c (155 aa).

This sequence belongs to the universal ribosomal protein uS7 family. Part of the 30S ribosomal subunit.

The protein resides in the plastid. In terms of biological role, one of the primary rRNA binding proteins, it binds directly to 16S rRNA where it nucleates assembly of the head domain of the 30S subunit. The sequence is that of Small ribosomal subunit protein uS7c (rps7) from Lathraea clandestina (Purple toothwort).